We begin with the raw amino-acid sequence, 618 residues long: Chaperone protein HscA homolog (618 aa).

Belongs to the heat shock protein 70 family.

Functionally, chaperone involved in the maturation of iron-sulfur cluster-containing proteins. Has a low intrinsic ATPase activity which is markedly stimulated by HscB. This chain is Chaperone protein HscA homolog, found in Methylibium petroleiphilum (strain ATCC BAA-1232 / LMG 22953 / PM1).